Here is a 58-residue protein sequence, read N- to C-terminus: DNA-directed RNA polymerases I, II, and III subunit RPABC4 (58 aa).

Residues C19, C22, C36, and C39 each contribute to the Zn(2+) site. The C4-type zinc-finger motif lies at C19–C39.

The protein belongs to the archaeal Rpo12/eukaryotic RPC10 RNA polymerase subunit family. Component of the RNA polymerase I (Pol I), RNA polymerase II (Pol II) and RNA polymerase III (Pol III) complexes consisting of at least 13, 12 and 17 subunits, respectively. Pol I complex consists of a ten-subunit catalytic core composed of POLR1A/RPA1, POLR1B/RPA2, POLR1C/RPAC1, POLR1D/RPAC2, POLR1H/RPA12, POLR2E/RPABC1, POLR2F/RPABC2, POLR2H/RPABC3, POLR2K/RPABC4 and POLR2L/RPABC5; a mobile stalk subunit POLR1F/RPA43 protruding from the core and additional subunits homologous to general transcription factors POLR1E/RPA49 and POLR1G/RPA34. Part of Pol I pre-initiation complex (PIC), in which Pol I core assembles with RRN3 and promoter-bound UTBF and SL1/TIF-IB complex. Pol II complex contains a ten-subunit catalytic core composed of POLR2A/RPB1, POLR2B/RPB2, POLR2C/RPB3, POLR2I/RPB9, POLR2J/RPB11, POLR2E/RPABC1, POLR2F/RPABC2, POLR2H/RPABC3, POLR2K/RPABC4 and POLR2L/RPABC5 and a mobile stalk composed of two subunits POLR2D/RPB4 and POLR2G/RPB7. Part of Pol II(G) complex, in which Pol II core associates with an additional subunit POLR2M; unlike conventional Pol II, Pol II(G) functions as a transcriptional repressor. Part of TBP-based Pol II pre-initiation complex (PIC), in which Pol II core assembles with general transcription factors and other specific initiation factors including GTF2E1, GTF2E2, GTF2F1, GTF2F2, TCEA1, ERCC2, ERCC3, GTF2H2, GTF2H3, GTF2H4, GTF2H5, GTF2A1, GTF2A2, GTF2B and TBP; this large multi-subunit PIC complex mediates DNA unwinding and targets Pol II core to the transcription start site where the first phosphodiester bond forms. Pol III complex consists of a ten-subunit catalytic core composed of POLR3A/RPC1, POLR3B/RPC2, POLR1C/RPAC1, POLR1D/RPAC2, POLR3K/RPC10, POLR2E/RPABC1, POLR2F/RPABC2, POLR2H/RPABC3, POLR2K/RPABC4 and POLR2L/RPABC5; a mobile stalk composed of two subunits POLR3H/RPC8 and CRCP/RPC9, protruding from the core and functioning primarily in transcription initiation; and additional subunits homologous to general transcription factors of the RNA polymerase II machinery, POLR3C/RPC3-POLR3F/RPC6-POLR3G/RPC7 heterotrimer required for transcription initiation and POLR3D/RPC4-POLR3E/RPC5 heterodimer involved in both transcription initiation and termination.

It localises to the nucleus. Its subcellular location is the nucleolus. In terms of biological role, DNA-dependent RNA polymerase catalyzes the transcription of DNA into RNA using the four ribonucleoside triphosphates as substrates. Common component of RNA polymerases I, II and III which synthesize ribosomal RNA precursors, mRNA precursors and many functional non-coding RNAs, and a small RNAs, such as 5S rRNA and tRNAs, respectively. The polypeptide is DNA-directed RNA polymerases I, II, and III subunit RPABC4 (Polr2k) (Mus musculus (Mouse)).